Consider the following 181-residue polypeptide: ATP synthase subunit delta (181 aa).

Belongs to the ATPase delta chain family. In terms of assembly, F-type ATPases have 2 components, F(1) - the catalytic core - and F(0) - the membrane proton channel. F(1) has five subunits: alpha(3), beta(3), gamma(1), delta(1), epsilon(1). F(0) has three main subunits: a(1), b(2) and c(10-14). The alpha and beta chains form an alternating ring which encloses part of the gamma chain. F(1) is attached to F(0) by a central stalk formed by the gamma and epsilon chains, while a peripheral stalk is formed by the delta and b chains.

The protein localises to the cell membrane. Its function is as follows. F(1)F(0) ATP synthase produces ATP from ADP in the presence of a proton or sodium gradient. F-type ATPases consist of two structural domains, F(1) containing the extramembraneous catalytic core and F(0) containing the membrane proton channel, linked together by a central stalk and a peripheral stalk. During catalysis, ATP synthesis in the catalytic domain of F(1) is coupled via a rotary mechanism of the central stalk subunits to proton translocation. This protein is part of the stalk that links CF(0) to CF(1). It either transmits conformational changes from CF(0) to CF(1) or is implicated in proton conduction. The chain is ATP synthase subunit delta from Clostridioides difficile (strain 630) (Peptoclostridium difficile).